Here is a 474-residue protein sequence, read N- to C-terminus: Vitamin D-binding protein (474 aa).

A signal peptide spans 1-16 (MKRILVFLLAVAFVHA). Albumin domains lie at 17 to 208 (LERG…QLKH), 209 to 393 (FSLL…QLTR), and 394 to 474 (ELSS…TLQS). 2 disulfide bridges follow: C29-C75 and C74-C83. N86 carries an N-linked (GlcNAc...) asparagine glycan. Cystine bridges form between C96–C112, C111–C122, C145–C190, C189–C198, C220–C266, C265–C273, C285–C299, C298–C310, C334–C375, C374–C383, C406–C452, and C451–C461. N287 carries N-linked (GlcNAc...) asparagine glycosylation.

This sequence belongs to the ALB/AFP/VDB family. Associates with membrane-bound immunoglobulin on the surface of B-lymphocytes and with IgG Fc receptor on the membranes of T-lymphocytes. Interacts with LRP2; the interaction is required for renal uptake of GC in complex with 25-hydroxyvitamin D3.

Its subcellular location is the secreted. Its function is as follows. Involved in vitamin D transport and storage, scavenging of extracellular G-actin, enhancement of the chemotactic activity of C5 alpha for neutrophils in inflammation and macrophage activation. This chain is Vitamin D-binding protein (GC), found in Bos taurus (Bovine).